The primary structure comprises 1186 residues: Sericin 1 (1186 aa).

The first 21 residues, 1-21 (MRFVLCCTLIALAALSVKAFG), serve as a signal peptide directing secretion. Composition is skewed to polar residues over residues 39-48 (AASSESSYLN) and 104-115 (NGGSASAGQSRD). 3 disordered regions span residues 39-119 (AASS…SSLR), 131-494 (AVAA…EDSS), and 518-1157 (GGAT…VNRL). The segment covering 145 to 155 (AQQNAQANWNA) has biased composition (low complexity). The span at 180 to 198 (SDKDITAASKDDSRADSSR) shows a compositional bias: basic and acidic residues. Positions 211-224 (SESAGLSDRSASSS) are enriched in low complexity. Positions 256-275 (YYNSSPDGSYNAGTRDSSIS) are enriched in polar residues. A compositionally biased stretch (basic and acidic residues) spans 286 to 299 (ADKDQIRAANDRSS). Residues 300-312 (SKQLKQSSAQISS) are compositionally biased toward low complexity. Over residues 321 to 334 (SKDRQYSNDKRSKS) the composition is skewed to basic and acidic residues. Composition is skewed to polar residues over residues 356–380 (RQSNTNYADQNSVRSDSAASDQTSK), 393–409 (AHSSGSRGSQNQKSSSY), and 416–445 (FSSSTNTEKSKFSSSNSVVETSDGASASRE). 6 stretches are compositionally biased toward low complexity: residues 465–491 (ASQSSSSRSSQESASYSSSSSSSTLSE), 518–537 (GGATKSGASSSTQATTVSGA), 553–698 (SSSS…YGYS), 705–1004 (RVSS…YSSS), 1015–1075 (SSSN…ASSE), and 1097–1145 (SSTT…TSSS). Repeat copies occupy residues 593-630 (SSTGSTSNTDSSSKSAGSRTSGGSSTYGYSSSHRGGSV), 631-668 (SSTGSSSNTDSSTKNAGSSTSGGSSTYGYSSSHRGGSV), 669-706 (SSTGSSSNTDSSTKSAGSSTSGGSSTYGYSSRHRGGRV), 707-744 (SSTGSSSTTDASSNSVGSSTSGGSSTYGYSSNSRDGSV), 745-782 (SSTGSSSNTDSNSNSAGSSTSGGSSTYGYSSNSRDGSV), 783-820 (SSTGSSSNTDSNSNSAGSSTSGGSSTYGYSSNSRDGSV), 821-858 (SSTGSSSNTDASTDLTGSSTSGGSSTYGYSSDSRDGSV), 859-896 (SSTGSSSNTDASTDLAGSSTSGGSSTYGYSSDCGDGSV), 897-934 (SSTGSSSNTDASTDLAGSSTSGGSSTYGYSSDSRDGSV), 935-972 (SSTGSSSNTDASTDLAGSSTSGGSSTYGYSSNSRDGSV), and 973-1010 (SSTGSSSNTDASTDLTGSSTSGGSSTYGYSSSNRDGSV). Residues 1148–1157 (RSHHSGVNRL) are compositionally biased toward basic residues.

Produced exclusively in the middle (MSG) section of silk glands.

The protein localises to the secreted. Its function is as follows. Provides the silk fibroin thread with a sticky coating. Acts as a cement by sticking silk threads together. The sequence is that of Sericin 1 (ser1) from Bombyx mori (Silk moth).